We begin with the raw amino-acid sequence, 950 residues long: MNTEAEQQLLHHARNGNAEEVRKLLAAMARMEVVADIDCKGRSKSNLGWTPLHLACYFGHKQVVEDLLKAGAKVNMLNDMGDTPLHRAAFTGRKELVLLLLEYDADSTVVNGSGQTAKEATHDKEIRNMLEAVERTQQRKLEELLLGAAREGRTAEVSALLSRPNPPDVNCSDQLGNTPLHCAAYRAHKQCVLKLLRSGADPSLKNKNDQKPLDLAQGAEMKHILVGNKVVHKALKRYEGPLWKSSRFFGWKLFWVVLEHGVLSWYRKQPDAVHNSYRQGCKHLTQAVCTVKPTDSCLFSIRCFDDTVHCFRVPKNSVQQSREKWLEAIEEHSAYSTHYCSQDQVTDDEEEDVVSAMDLKESLARAQTCQQRLDREIYNFLKMIKECDVAKDMLPSFLQKADIVSEASRETCVALNDCLNLFTKQEGVRNFKLEQEQEKNKILSEALETLATEHHELERSLVEGSPPVSILSEEEFYDALSGSESEGSLTCLEAVTAHSFEENEVPGSSGKHRMSEGKDCGGGDALSNGIKKHRTSLPSPMFSRNDFSIWSILRKCIGMELSKITMPVIFNEPLSFLQRLTEYMEHTYLIHKASSLSDPVERMQCVAAFAVSAVASQWERTGKPFNPLLGETYELVRDDLGFRLISEQVSHHPPISAFHAEGLNNDFIFHGSIYPKLKFWGKSVEAEPKGTITLELLDHNEAYTWTNPTCCVHNIIVGKLWIEQYGNVEIINHKTGDKCVLNFKPCGLFGKELHKVEGYIQDKSKKKLCALYGKWTECLYSVDPATFDAYKKNDKKNTEEKKNSKQTSSSEESDEMPVPDSESVFIIPGSVLLWRIAPRPPNSAQMYNFTSFAMVLNEVDKEMESVIPKTDCRLRPDIRAMENGEIDLASEEKKRLEEKQRAARKNRSKSEEDWKTRWFHQGPNPYSGAQDWIYSGSYWDRNYFNLPDIY.

Residues 1 to 237 are interaction with RAB7A; sequence MNTEAEQQLL…NKVVHKALKR (237 aa). 3 ANK repeats span residues 47 to 76, 80 to 109, and 175 to 204; these read LGWT…KVNM, MGDT…DSTV, and LGNT…DPSL. The 100-residue stretch at 235-334 folds into the PH domain; it reads LKRYEGPLWK…WLEAIEEHSA (100 aa). Residues 430–463 adopt a coiled-coil conformation; sequence NFKLEQEQEKNKILSEALETLATEHHELERSLVE. The FFAT signature appears at 469-483; that stretch reads SILSEEEFYDALSGS. Ser499 carries the post-translational modification Phosphoserine. 2 disordered regions span residues 502-530 and 795-821; these read ENEV…SNGI and KKNT…VPDS. Residues 879–913 adopt a coiled-coil conformation; sequence RAMENGEIDLASEEKKRLEEKQRAARKNRSKSEED.

This sequence belongs to the OSBP family. Interacts (via FFAT motif) with VAPA and VAPB. Interacts with the GTP-bound form of RAB7A. Interacts with OAS1B. Interacts (via FFAT motif) with MOSPD2 (via MSP domain). In terms of tissue distribution, ubiquitous.

The protein resides in the late endosome. Its function is as follows. Binds phospholipids; exhibits strong binding to phosphatidic acid and weak binding to phosphatidylinositol 3-phosphate. Stabilizes GTP-bound RAB7A on late endosomes/lysosomes and alters functional properties of late endocytic compartments via its interaction with RAB7A. Binds 25-hydroxycholesterol and cholesterol. This is Oxysterol-binding protein-related protein 1 from Mus musculus (Mouse).